We begin with the raw amino-acid sequence, 386 residues long: Putative gustatory receptor 22b (386 aa).

The Cytoplasmic portion of the chain corresponds to 1-48 (MFGSSREIRPYLARQMLKTTLYGSWLLGIFPFTLDSGKRIRQLRRSRC). The chain crosses the membrane as a helical span at residues 49-69 (LTLYGLVLNYFLIFTLIRLAF). Residues 70 to 89 (EYRKHKLEAFKRNPVLEMIN) are Extracellular-facing. Residues 90–110 (VVIGIINVLSALIVHFMNFWG) traverse the membrane as a helical segment. Residues 111–155 (SRKVGEICNELLILEYQDFEGLNGRNCPNFNCFVIQKCLTILGQL) are Cytoplasmic-facing. A helical transmembrane segment spans residues 156-176 (LSFFTLNFALPGLEFHICLVL). Residues 177–178 (LS) lie on the Extracellular side of the membrane. The helical transmembrane segment at 179-199 (CLMEFSLNLNIMHYHVGVLLI) threads the bilayer. Residues 200–254 (YRYVWLINEQLKDLVSQLKLNPETDFSRIHQFLSLYKRLLELNRKLVIAYEYQMT) are Cytoplasmic-facing. Residues 255–275 (LFIIAQLSGNIVVIYFLIVYG) traverse the membrane as a helical segment. Residues 276–282 (LSMRTYS) lie on the Extracellular side of the membrane. A helical transmembrane segment spans residues 283–303 (IFLVAFPNSLLINIWDFWLCI). Residues 304 to 363 (AACDLTEKAGDETAIILKIFSDLEHRDDKLEMSVNEFAWLCSHRKFRFQLCGLFSMNCRM) lie on the Cytoplasmic side of the membrane. A helical membrane pass occupies residues 364 to 384 (GFKMIITTFLYLVYLVQFDYM). The Extracellular portion of the chain corresponds to 385-386 (NL).

Belongs to the insect chemoreceptor superfamily. Gustatory receptor (GR) family. Gr22e subfamily. As to expression, expressed in taste bristles in the foreleg and labial palps. In larvae, is expressed in neurons of the dorsal and posterior pharyngeal sense organs. Expressed in taste neurons that mediate sensitivity to bitter compounds.

Its subcellular location is the cell membrane. Its function is as follows. Probable gustatory receptor which mediates acceptance or avoidance behavior, depending on its substrates. Seems to be involved in the sensing of bitter taste since it is expressed in neurons that mediate sensitivity to bitter compounds. This Drosophila melanogaster (Fruit fly) protein is Putative gustatory receptor 22b.